Consider the following 576-residue polypeptide: Arginine--tRNA ligase (576 aa).

Positions 122-132 (PNVAKEMHVGH) match the 'HIGH' region motif.

Belongs to the class-I aminoacyl-tRNA synthetase family. Monomer.

It is found in the cytoplasm. The enzyme catalyses tRNA(Arg) + L-arginine + ATP = L-arginyl-tRNA(Arg) + AMP + diphosphate. In Pectobacterium atrosepticum (strain SCRI 1043 / ATCC BAA-672) (Erwinia carotovora subsp. atroseptica), this protein is Arginine--tRNA ligase.